A 185-amino-acid chain; its full sequence is Elongation factor P (185 aa).

This sequence belongs to the elongation factor P family.

It localises to the cytoplasm. It participates in protein biosynthesis; polypeptide chain elongation. Its function is as follows. Involved in peptide bond synthesis. Stimulates efficient translation and peptide-bond synthesis on native or reconstituted 70S ribosomes in vitro. Probably functions indirectly by altering the affinity of the ribosome for aminoacyl-tRNA, thus increasing their reactivity as acceptors for peptidyl transferase. In Lachnoclostridium phytofermentans (strain ATCC 700394 / DSM 18823 / ISDg) (Clostridium phytofermentans), this protein is Elongation factor P.